The sequence spans 264 residues: MLRSLYSGISGMKNFQTKLDVIGNNIANVNTVGFKKSRVTFKDMVSQTIAGGSAAGATIGGTNSKQIGLGSSSGTIDTIHSTSATQSTGRTLDLAIDGDGYFRIDTGDGTAYTRAGNFYLDNTGTLVTGDGYHVLNMNGGTIKIPTDAQSFSIGSDGKVSIVDAEGKTQDGGQIGIVTFANSDGLDKIGSNLYRESLNSGTASAANQPGDGGTGALKSGFLEMSNVDLTDEFTEMIVAQRGFQSNSKIITTSDEILQELVNLKR.

Belongs to the flagella basal body rod proteins family. In terms of assembly, the basal body constitutes a major portion of the flagellar organelle and consists of four rings (L,P,S, and M) mounted on a central rod. The rod consists of about 26 subunits of FlgG in the distal portion, and FlgB, FlgC and FlgF are thought to build up the proximal portion of the rod with about 6 subunits each.

The protein resides in the bacterial flagellum basal body. The chain is Flagellar basal-body rod protein FlgG (flgG) from Bacillus subtilis (strain 168).